The sequence spans 314 residues: SERTA domain-containing protein 2 (314 aa).

An SERTA domain is found at 33-80; that stretch reads YTLQRQTIFNISLMKLYNHRPLTEPSLQKTVLINNMLRRIQEELKQEG. Disordered regions lie at residues 77–119 and 181–222; these read KQEG…HPCD and PTST…SKLM. Polar residues predominate over residues 87 to 97; the sequence is TPSSQPTTEPS. Residues 182 to 193 are compositionally biased toward low complexity; the sequence is TSTSTEAATAAT. The span at 210–221 shows a compositional bias: basic and acidic residues; it reads GPQESRADDSKL. Residues 235 to 311 are required for transactivation activity; it reads TGFLTDLTLD…TELDHIMEVL (77 aa). Residues 238–243 carry the Nuclear export signal (NES) motif; it reads LTDLTL.

In terms of assembly, interacts with XPO1; which mediates nuclear export. Interacts with TFDP1; modulates transactivation activity of TFDP1/E2F complexes. Polyubiquitinated, which promotes proteasomal degradation. In terms of tissue distribution, expressed in adipose tissue.

The protein localises to the nucleus. It localises to the cytoplasm. In terms of biological role, acts at E2F-responsive promoters as coregulator to integrate signals provided by PHD- and/or bromodomain-containing transcription factors. May act as coactivator as well as corepressor of E2F1-TFDP1 and E2F4-TFDP1 complexes on E2F consensus binding sites, which would activate or inhibit E2F-target genes expression. Modulates fat storage by down-regulating the expression of key genes involved in adipocyte lipolysis, thermogenesis and oxidative metabolism. The chain is SERTA domain-containing protein 2 (SERTAD2) from Homo sapiens (Human).